We begin with the raw amino-acid sequence, 401 residues long: Phosphoglycerate kinase (401 aa).

Residues 21–23, Arg36, 59–62, Arg119, and Arg160 contribute to the substrate site; these read DFN and HLGR. ATP-binding positions include Lys212, Glu330, and 357-360; that span reads GGDS.

Belongs to the phosphoglycerate kinase family. As to quaternary structure, monomer.

The protein localises to the cytoplasm. The catalysed reaction is (2R)-3-phosphoglycerate + ATP = (2R)-3-phospho-glyceroyl phosphate + ADP. The protein operates within carbohydrate degradation; glycolysis; pyruvate from D-glyceraldehyde 3-phosphate: step 2/5. This chain is Phosphoglycerate kinase, found in Limosilactobacillus fermentum (strain NBRC 3956 / LMG 18251) (Lactobacillus fermentum).